Consider the following 245-residue polypeptide: MILFPAIDLKDGQCVRLKLGDMDQATVYNPDPAAQARAFEEQGFEWLHVVDLNGAFAGETVNGAAVDAILKATGNPVQLGGGIRTLEHIENWLSHGLARVILGTVAVRDPALVIEACGKFPGRVAVGIDAKGGKVAVEGWAEASELGVIELAKKFEGAGVSAIIYTDIDRDGILTGINWDSTLELANAVSIPVIASGGLASMDDIRRLAAPDAAKLEGAISGRALYDGRIDPKEALALIRAARKA.

Asp-8 functions as the Proton acceptor in the catalytic mechanism. Asp-129 functions as the Proton donor in the catalytic mechanism.

Belongs to the HisA/HisF family.

The protein resides in the cytoplasm. The enzyme catalyses 1-(5-phospho-beta-D-ribosyl)-5-[(5-phospho-beta-D-ribosylamino)methylideneamino]imidazole-4-carboxamide = 5-[(5-phospho-1-deoxy-D-ribulos-1-ylimino)methylamino]-1-(5-phospho-beta-D-ribosyl)imidazole-4-carboxamide. It participates in amino-acid biosynthesis; L-histidine biosynthesis; L-histidine from 5-phospho-alpha-D-ribose 1-diphosphate: step 4/9. This Sinorhizobium fredii (strain NBRC 101917 / NGR234) protein is 1-(5-phosphoribosyl)-5-[(5-phosphoribosylamino)methylideneamino] imidazole-4-carboxamide isomerase.